The sequence spans 216 residues: Octanoyltransferase (216 aa).

The BPL/LPL catalytic domain occupies 29–209 (DRAGECVWLL…SFDAVFGPCP (181 aa)). Residues 68-75 (RGGQYTYH), 140-142 (AIG), and 153-155 (GFA) each bind substrate. Residue Cys171 is the Acyl-thioester intermediate of the active site.

It belongs to the LipB family.

The protein localises to the cytoplasm. It carries out the reaction octanoyl-[ACP] + L-lysyl-[protein] = N(6)-octanoyl-L-lysyl-[protein] + holo-[ACP] + H(+). It functions in the pathway protein modification; protein lipoylation via endogenous pathway; protein N(6)-(lipoyl)lysine from octanoyl-[acyl-carrier-protein]: step 1/2. Its function is as follows. Catalyzes the transfer of endogenously produced octanoic acid from octanoyl-acyl-carrier-protein onto the lipoyl domains of lipoate-dependent enzymes. Lipoyl-ACP can also act as a substrate although octanoyl-ACP is likely to be the physiological substrate. The polypeptide is Octanoyltransferase (Rhodospirillum rubrum (strain ATCC 11170 / ATH 1.1.1 / DSM 467 / LMG 4362 / NCIMB 8255 / S1)).